The sequence spans 469 residues: MAAKLDSQLLGLVFQSRPDILKGIQEAADSPARIDLFNNIASFVYERIADNTSEEPATKRRRVEAQTSGPNGAAHPIAGSQAAVLGADAAAAEPVLLEIKDISVSVPQRKKYDLCFTKNFLYARASGSPVPVQGIVYPWKDIEHAFYLPVPDKSQVQHNYVLLPRNSYLPTTKSQQSADQQTQQQTSAPLEPLVFTIPSTAPKPGTITGPSAAAAAPVSDSYATLFHWALTTSLHAAGNHACELVSSDPKVFHSVARQAYRPQEKAVHVKAFRGSKDGFLFFLPTGILWGFKKPLLFLPLDKIVAISYTSVLQRTFNIVVELEGGGEGSEEGGQEIEFSMLDQEDYAGIDQSYVRRHGLADRSMAEQRKAKKQLAENAKKAAANGEEGEGGEGGEAGDGLTELERAQKEEEQRLQDEEDEEEEDYDPGSEGESEGSGSSSEEEEEEEDGEGEGDEDDDEDMGEGLEGEE.

Disordered stretches follow at residues 54–73 and 364–469; these read EEPATKRRRVEAQTSGPNGA and MAEQ…EGEE. 2 stretches are compositionally biased toward basic and acidic residues: residues 364–379 and 402–415; these read MAEQRKAKKQLAENAK and ELERAQKEEEQRLQ. 2 stretches are compositionally biased toward acidic residues: residues 416 to 433 and 440 to 469; these read DEEDEEEEDYDPGSEGES and SEEEEEEEDGEGEGDEDDDEDMGEGLEGEE.

This sequence belongs to the RTT106 family. Interacts with histones H3 and H4.

The protein localises to the nucleus. Its subcellular location is the chromosome. Functionally, histones H3 and H4 chaperone involved in the nucleosome formation and heterochromatin silencing. Required for the deposition of H3K56ac-carrying H3-H4 complex onto newly-replicated DNA. Plays a role in the transcriptional regulation of the cell-cycle dependent histone genes by creating a repressive structure at the core histone gene promoter. The protein is Histone chaperone rtt-106 (rtt-106) of Neurospora crassa (strain ATCC 24698 / 74-OR23-1A / CBS 708.71 / DSM 1257 / FGSC 987).